The sequence spans 213 residues: Peptide methionine sulfoxide reductase MsrA (213 aa).

The active site involves C53.

It belongs to the MsrA Met sulfoxide reductase family.

It catalyses the reaction L-methionyl-[protein] + [thioredoxin]-disulfide + H2O = L-methionyl-(S)-S-oxide-[protein] + [thioredoxin]-dithiol. It carries out the reaction [thioredoxin]-disulfide + L-methionine + H2O = L-methionine (S)-S-oxide + [thioredoxin]-dithiol. Functionally, has an important function as a repair enzyme for proteins that have been inactivated by oxidation. Catalyzes the reversible oxidation-reduction of methionine sulfoxide in proteins to methionine. The polypeptide is Peptide methionine sulfoxide reductase MsrA (Serratia proteamaculans (strain 568)).